Consider the following 116-residue polypeptide: Large ribosomal subunit protein uL18 (116 aa).

This sequence belongs to the universal ribosomal protein uL18 family. In terms of assembly, part of the 50S ribosomal subunit; part of the 5S rRNA/L5/L18/L25 subcomplex. Contacts the 5S and 23S rRNAs.

Functionally, this is one of the proteins that bind and probably mediate the attachment of the 5S RNA into the large ribosomal subunit, where it forms part of the central protuberance. The polypeptide is Large ribosomal subunit protein uL18 (Mycoplasma pneumoniae (strain ATCC 29342 / M129 / Subtype 1) (Mycoplasmoides pneumoniae)).